A 354-amino-acid polypeptide reads, in one-letter code: MHTDISSFDPALAARLRAAVDSKTKPLGALGRLESLAVQIGLIQDTEAPVLIRPAMVVFAADHGVAQAGVSAYPQAVTAQMVLNFIAGGAAVNVFCRQHGFALEIVNAGVAMPLWSLGVPGLIDAPIGAGTRNFAHEPAMTAAERDRAMALGAQRVAAHAELGSNVIALGEMGIGNTASAACLMARLCDLPLAQCVGRGAGLDDAGLARKCAVLEAALAAHADARAPLDALACFGGFEIAAMAGAMLEAARRRMVILVDGFIASAAALVATRVAPEVQRFCVFAHLSDEHGHRALLAALGAEPLLQLSMRLGEGSGAVLAYPLVVSAVAFLREMATFASAGVSEQAPPALDPAA.

The Proton acceptor role is filled by Glu313.

This sequence belongs to the CobT family.

The enzyme catalyses 5,6-dimethylbenzimidazole + nicotinate beta-D-ribonucleotide = alpha-ribazole 5'-phosphate + nicotinate + H(+). It functions in the pathway nucleoside biosynthesis; alpha-ribazole biosynthesis; alpha-ribazole from 5,6-dimethylbenzimidazole: step 1/2. In terms of biological role, catalyzes the synthesis of alpha-ribazole-5'-phosphate from nicotinate mononucleotide (NAMN) and 5,6-dimethylbenzimidazole (DMB). This is Nicotinate-nucleotide--dimethylbenzimidazole phosphoribosyltransferase from Ralstonia nicotianae (strain ATCC BAA-1114 / GMI1000) (Ralstonia solanacearum).